A 102-amino-acid polypeptide reads, in one-letter code: Integration host factor subunit alpha (102 aa).

The protein belongs to the bacterial histone-like protein family. Heterodimer of an alpha and a beta chain.

This protein is one of the two subunits of integration host factor, a specific DNA-binding protein that functions in genetic recombination as well as in transcriptional and translational control. This chain is Integration host factor subunit alpha, found in Chromohalobacter salexigens (strain ATCC BAA-138 / DSM 3043 / CIP 106854 / NCIMB 13768 / 1H11).